Here is a 71-residue protein sequence, read N- to C-terminus: Beta-defensin 25 (71 aa).

Positions 1 to 22 (MAKWILLIVALLVLGHVPSGST) are cleaved as a signal peptide. Disulfide bonds link Cys27–Cys54, Cys34–Cys48, and Cys38–Cys55.

Belongs to the beta-defensin family.

Its subcellular location is the secreted. Has antibacterial activity. This is Beta-defensin 25 (Defb25) from Rattus norvegicus (Rat).